A 302-amino-acid chain; its full sequence is uncharacterized protein (302 aa).

This is an uncharacterized protein from Haemophilus influenzae (strain ATCC 51907 / DSM 11121 / KW20 / Rd).